A 414-amino-acid chain; its full sequence is Phosphoglycerate kinase (414 aa).

Residues 19-21 (DLN), Arg-34, 57-60 (HQSK), Arg-114, and Arg-154 contribute to the substrate site. ATP contacts are provided by residues Glu-332 and 358 to 361 (GGHS).

Belongs to the phosphoglycerate kinase family. In terms of assembly, monomer.

It localises to the cytoplasm. The enzyme catalyses (2R)-3-phosphoglycerate + ATP = (2R)-3-phospho-glyceroyl phosphate + ADP. It participates in carbohydrate degradation; glycolysis; pyruvate from D-glyceraldehyde 3-phosphate: step 2/5. This chain is Phosphoglycerate kinase, found in Thermococcus onnurineus (strain NA1).